A 325-amino-acid chain; its full sequence is Transaldolase (325 aa).

K125 (schiff-base intermediate with substrate) is an active-site residue.

Belongs to the transaldolase family. Type 2 subfamily.

The protein localises to the cytoplasm. The enzyme catalyses D-sedoheptulose 7-phosphate + D-glyceraldehyde 3-phosphate = D-erythrose 4-phosphate + beta-D-fructose 6-phosphate. Its pathway is carbohydrate degradation; pentose phosphate pathway; D-glyceraldehyde 3-phosphate and beta-D-fructose 6-phosphate from D-ribose 5-phosphate and D-xylulose 5-phosphate (non-oxidative stage): step 2/3. In terms of biological role, transaldolase is important for the balance of metabolites in the pentose-phosphate pathway. This is Transaldolase from Campylobacter jejuni subsp. jejuni serotype O:23/36 (strain 81-176).